Here is a 393-residue protein sequence, read N- to C-terminus: uncharacterized protein (393 aa).

Residues 2 to 266 (AMIGLVGKPN…AEKAGIIKRK (265 aa)) form the OBG-type G domain. GTP-binding positions include 8–15 (GKPNVGKS) and 78–82 (DVAGL). The TGS domain occupies 314–390 (DMIVVYPVED…KHNDIIKIVS (77 aa)).

Belongs to the TRAFAC class OBG-HflX-like GTPase superfamily. OBG GTPase family.

This is an uncharacterized protein from Methanocaldococcus jannaschii (strain ATCC 43067 / DSM 2661 / JAL-1 / JCM 10045 / NBRC 100440) (Methanococcus jannaschii).